Consider the following 167-residue polypeptide: Small ribosomal subunit protein uS3m (167 aa).

The N-terminal 35 residues, 1–35 (MAASVCSGLLGPRVLSWSRELPCAWRALHTSPVCA), are a transit peptide targeting the mitochondrion.

This sequence belongs to the universal ribosomal protein uS3 family. Component of the mitochondrial small ribosomal subunit (mt-SSU). Mature mammalian 55S mitochondrial ribosomes consist of a small (28S) and a large (39S) subunit. The 28S small subunit contains a 12S ribosomal RNA (12S mt-rRNA) and 30 different proteins. The 39S large subunit contains a 16S rRNA (16S mt-rRNA), a copy of mitochondrial valine transfer RNA (mt-tRNA(Val)), which plays an integral structural role, and 52 different proteins.

It is found in the mitochondrion. The polypeptide is Small ribosomal subunit protein uS3m (MRPS24) (Homo sapiens (Human)).